Consider the following 66-residue polypeptide: Large ribosomal subunit protein bL35 (66 aa).

A compositionally biased stretch (basic residues) spans 1-24 (MPKQKTHRGAAKRFKKTGSGKLKR). Residues 1–26 (MPKQKTHRGAAKRFKKTGSGKLKRDH) are disordered.

This sequence belongs to the bacterial ribosomal protein bL35 family.

This chain is Large ribosomal subunit protein bL35, found in Bacillus cytotoxicus (strain DSM 22905 / CIP 110041 / 391-98 / NVH 391-98).